Reading from the N-terminus, the 184-residue chain is Large ribosomal subunit protein uL6 (184 aa).

The protein belongs to the universal ribosomal protein uL6 family. As to quaternary structure, part of the 50S ribosomal subunit.

This protein binds to the 23S rRNA, and is important in its secondary structure. It is located near the subunit interface in the base of the L7/L12 stalk, and near the tRNA binding site of the peptidyltransferase center. This is Large ribosomal subunit protein uL6 from Thermotoga neapolitana (strain ATCC 49049 / DSM 4359 / NBRC 107923 / NS-E).